A 298-amino-acid polypeptide reads, in one-letter code: Probable 2-(5''-triphosphoribosyl)-3'-dephosphocoenzyme-A synthase 2 (298 aa).

The protein belongs to the CitG/MdcB family.

The catalysed reaction is 3'-dephospho-CoA + ATP = 2'-(5''-triphospho-alpha-D-ribosyl)-3'-dephospho-CoA + adenine. In Salmonella typhi, this protein is Probable 2-(5''-triphosphoribosyl)-3'-dephosphocoenzyme-A synthase 2.